The primary structure comprises 203 residues: DNA-directed RNA polymerase subunit gamma (203 aa).

Cys34, Cys36, Cys49, and Cys52 together coordinate Zn(2+).

This sequence belongs to the RNA polymerase beta' chain family. RpoC1 subfamily. In terms of assembly, in cyanobacteria the RNAP catalytic core is composed of 2 alpha, 1 beta, 1 beta', 1 gamma and 1 omega subunit. When a sigma factor is associated with the core the holoenzyme is formed, which can initiate transcription. Zn(2+) is required as a cofactor.

It catalyses the reaction RNA(n) + a ribonucleoside 5'-triphosphate = RNA(n+1) + diphosphate. Its function is as follows. DNA-dependent RNA polymerase catalyzes the transcription of DNA into RNA using the four ribonucleoside triphosphates as substrates. The sequence is that of DNA-directed RNA polymerase subunit gamma (rpoC1) from Prochloron sp.